Here is a 164-residue protein sequence, read N- to C-terminus: UPF0304 protein YfbU (164 aa).

Belongs to the UPF0304 family.

The sequence is that of UPF0304 protein YfbU from Shigella flexneri serotype 5b (strain 8401).